Here is a 369-residue protein sequence, read N- to C-terminus: Molybdenum import ATP-binding protein ModC (369 aa).

Positions Leu-4 to Ala-239 constitute an ABC transporter domain. Gly-31–Ser-38 is a binding site for ATP. One can recognise a Mop domain in the interval His-293–Pro-361.

The protein belongs to the ABC transporter superfamily. Molybdate importer (TC 3.A.1.8) family. In terms of assembly, the complex is composed of two ATP-binding proteins (ModC), two transmembrane proteins (ModB) and a solute-binding protein (ModA).

It is found in the cell membrane. It carries out the reaction molybdate(out) + ATP + H2O = molybdate(in) + ADP + phosphate + H(+). Part of the ABC transporter complex ModABC involved in molybdenum import. Responsible for energy coupling to the transport system. The chain is Molybdenum import ATP-binding protein ModC from Mycobacterium tuberculosis (strain CDC 1551 / Oshkosh).